The following is a 99-amino-acid chain: Acylphosphatase-2 (99 aa).

Serine 2 carries the post-translational modification N-acetylserine. Positions 9–99 constitute an Acylphosphatase-like domain; it reads SVDYEVFGRV…LEYSSFNIRY (91 aa). Active-site residues include arginine 24 and asparagine 42. Serine 93 bears the Phosphoserine mark.

It belongs to the acylphosphatase family.

It carries out the reaction an acyl phosphate + H2O = a carboxylate + phosphate + H(+). Its physiological role is not yet clear. The protein is Acylphosphatase-2 (ACYP2) of Bos taurus (Bovine).